The sequence spans 613 residues: Myosin light chain kinase 2, skeletal/cardiac muscle (613 aa).

A compositionally biased stretch (polar residues) spans 1-20; that stretch reads MTTENGAVELGSQSLSTEQT. The disordered stretch occupies residues 1-168; the sequence is MTTENGAVEL…RGSPAFLHSP (168 aa). The segment covering 32–55 has biased composition (basic and acidic residues); that stretch reads SEKEPSAPATEKDLSPPNAKKDPG. Positions 56-66 are enriched in pro residues; it reads APDPKNNPDPP. The span at 67–83 shows a compositional bias: basic and acidic residues; that stretch reads SLKKDPAKAPGPEKKGD. Residues 95-105 show a composition bias toward gly residues; the sequence is SGEGDGGGGPA. The segment covering 106-122 has biased composition (low complexity); sequence EGSEGPPAALPLPTATA. The span at 145–158 shows a compositional bias: basic and acidic residues; the sequence is KAGKKAAECREAGR. Residues S161, S167, and S169 each carry the phosphoserine modification. Positions 219-240 are disordered; the sequence is EKKKEEAEKASGQAGQAKVQGD. In terms of domain architecture, Protein kinase spans 302–557; it reads MNSKEALGGG…AEQCLAHPWL (256 aa). Residues 308 to 316 and K331 contribute to the ATP site; that span reads LGGGKFGAV. D423 acts as the Proton acceptor in catalysis. At T462 the chain carries Phosphothreonine. Positions 591–603 are calmodulin-binding; it reads IAVSAANRFKKIS.

This sequence belongs to the protein kinase superfamily. CAMK Ser/Thr protein kinase family. As to quaternary structure, may interact with centrin.

It is found in the cytoplasm. The enzyme catalyses L-seryl-[myosin light chain] + ATP = O-phospho-L-seryl-[myosin light chain] + ADP + H(+). It catalyses the reaction L-threonyl-[myosin light chain] + ATP = O-phospho-L-threonyl-[myosin light chain] + ADP + H(+). Its function is as follows. Implicated in the level of global muscle contraction and cardiac function. Phosphorylates a specific serine in the N-terminus of a myosin light chain. The protein is Myosin light chain kinase 2, skeletal/cardiac muscle (Mylk2) of Mus musculus (Mouse).